Reading from the N-terminus, the 312-residue chain is tRNA dimethylallyltransferase (312 aa).

Residue 10-17 coordinates ATP; that stretch reads GPTAVGKT. 12–17 is a substrate binding site; that stretch reads TAVGKT. The interaction with substrate tRNA stretch occupies residues 35 to 38; it reads DSMQ.

This sequence belongs to the IPP transferase family. As to quaternary structure, monomer. Mg(2+) is required as a cofactor.

It carries out the reaction adenosine(37) in tRNA + dimethylallyl diphosphate = N(6)-dimethylallyladenosine(37) in tRNA + diphosphate. In terms of biological role, catalyzes the transfer of a dimethylallyl group onto the adenine at position 37 in tRNAs that read codons beginning with uridine, leading to the formation of N6-(dimethylallyl)adenosine (i(6)A). The chain is tRNA dimethylallyltransferase from Alkaliphilus metalliredigens (strain QYMF).